The chain runs to 217 residues: ATP-dependent Clp protease proteolytic subunit (217 aa).

S121 serves as the catalytic Nucleophile. Residue H146 is part of the active site.

This sequence belongs to the peptidase S14 family. Fourteen ClpP subunits assemble into 2 heptameric rings which stack back to back to give a disk-like structure with a central cavity, resembling the structure of eukaryotic proteasomes.

It localises to the cytoplasm. The enzyme catalyses Hydrolysis of proteins to small peptides in the presence of ATP and magnesium. alpha-casein is the usual test substrate. In the absence of ATP, only oligopeptides shorter than five residues are hydrolyzed (such as succinyl-Leu-Tyr-|-NHMec, and Leu-Tyr-Leu-|-Tyr-Trp, in which cleavage of the -Tyr-|-Leu- and -Tyr-|-Trp bonds also occurs).. Its function is as follows. Cleaves peptides in various proteins in a process that requires ATP hydrolysis. Has a chymotrypsin-like activity. Plays a major role in the degradation of misfolded proteins. The chain is ATP-dependent Clp protease proteolytic subunit from Burkholderia cenocepacia (strain HI2424).